A 178-amino-acid chain; its full sequence is Ribulose bisphosphate carboxylase small subunit, chloroplastic (178 aa).

The N-terminal 55 residues, 1 to 55, are a transit peptide targeting the chloroplast; it reads MASSMMVSTAAVSRTSPAQSNMVVPFAGLHSSAAFPVTRKFADSSKLPSNGLRVR.

The protein belongs to the RuBisCO small chain family. Heterohexadecamer of 8 large and 8 small subunits.

It localises to the plastid. It is found in the chloroplast. Its function is as follows. RuBisCO catalyzes two reactions: the carboxylation of D-ribulose 1,5-bisphosphate, the primary event in carbon dioxide fixation, as well as the oxidative fragmentation of the pentose substrate. Both reactions occur simultaneously and in competition at the same active site. Although the small subunit is not catalytic it is essential for maximal activity. This chain is Ribulose bisphosphate carboxylase small subunit, chloroplastic, found in Zantedeschia aethiopica (White calla lily).